The primary structure comprises 300 residues: ATP synthase gamma chain (300 aa).

Belongs to the ATPase gamma chain family. F-type ATPases have 2 components, CF(1) - the catalytic core - and CF(0) - the membrane proton channel. CF(1) has five subunits: alpha(3), beta(3), gamma(1), delta(1), epsilon(1). CF(0) has three main subunits: a, b and c.

It is found in the cell membrane. Its function is as follows. Produces ATP from ADP in the presence of a proton gradient across the membrane. The gamma chain is believed to be important in regulating ATPase activity and the flow of protons through the CF(0) complex. In Acidothermus cellulolyticus (strain ATCC 43068 / DSM 8971 / 11B), this protein is ATP synthase gamma chain.